A 58-amino-acid chain; its full sequence is MNRILGMIFLFCLISCYAVDIIQSAKSNGCSVELVKRCQERKCASPCCRDGECHCGCK.

The signal sequence occupies residues 1–18 (MNRILGMIFLFCLISCYA).

It belongs to the scoloptoxin-14 family. In terms of processing, contains 4 disulfide bonds. In terms of tissue distribution, expressed by the venom gland.

Its subcellular location is the secreted. The protein is U-scoloptoxin(14)-Sa1a of Scolopendra alternans (Florida Keys giant centipede).